The sequence spans 382 residues: uncharacterized protein (382 aa).

Helical transmembrane passes span Gly-14 to Ala-34, Val-45 to Ile-65, Tyr-75 to Trp-95, Phe-102 to Ser-122, Leu-131 to Ser-151, Leu-157 to Phe-177, Val-206 to Phe-226, Ala-235 to Ile-255, Val-270 to Pro-290, Ala-291 to Cys-311, Ala-325 to Met-345, and Phe-348 to Leu-368.

The protein belongs to the major facilitator superfamily. YcaD (TC 2.A.1.26) family.

Its subcellular location is the cell inner membrane. This is an uncharacterized protein from Escherichia coli O17:K52:H18 (strain UMN026 / ExPEC).